Consider the following 698-residue polypeptide: Endogenous retrovirus group K member 9 Env polyprotein (698 aa).

The tract at residues 1 to 47 (MNPSEMQRKAPPRRRRHRNRAPLTHKMNKMVTSEEQMKLPSTKKAEP) is disordered. An N-terminal signal peptide occupies residues 1 to 89 (MNPSEMQRKA…ALMIVSMVVS (89 aa)). The span at 10 to 20 (APPRRRRHRNR) shows a compositional bias: basic residues. At 90-631 (LPMPAGAAAA…NLNPVTWVKT (542 aa)) the chain is on the extracellular side. 7 N-linked (GlcNAc...) asparagine glycosylation sites follow: N100, N128, N153, N273, N354, N371, and N460. Residues 465 to 485 (FIFTLIAVIMGLIAVTATAAV) form a fusion peptide region. N-linked (GlcNAc...) asparagine glycosylation is found at N506, N553, N565, and N584. A helical membrane pass occupies residues 632–652 (IGSTTIINLILILVCLFCLLL). Residues 653–698 (VCRCTQQLRRDSDHRERAMMTMAVLSKRKGGNVGKSKRDQIVTVSV) are Cytoplasmic-facing.

The protein belongs to the beta type-B retroviral envelope protein family. HERV class-II K(HML-2) env subfamily. In terms of assembly, the surface (SU) and transmembrane (TM) proteins form a heterodimer. SU and TM are attached by noncovalent interactions or by a labile interchain disulfide bond. In terms of processing, specific enzymatic cleavages in vivo yield the mature SU and TM proteins.

The protein localises to the cell membrane. Its subcellular location is the virion. Retroviral envelope proteins mediate receptor recognition and membrane fusion during early infection. Endogenous envelope proteins may have kept, lost or modified their original function during evolution. This endogenous envelope protein has lost its original fusogenic properties. Functionally, SU mediates receptor recognition. Its function is as follows. TM anchors the envelope heterodimer to the viral membrane through one transmembrane domain. The other hydrophobic domain, called fusion peptide, mediates fusion of the viral membrane with the target cell membrane. The sequence is that of Endogenous retrovirus group K member 9 Env polyprotein (ERVK-9) from Homo sapiens (Human).